The primary structure comprises 525 residues: ATP synthase subunit alpha (525 aa).

169–176 (GDRQTGKT) lines the ATP pocket.

Belongs to the ATPase alpha/beta chains family. As to quaternary structure, F-type ATPases have 2 components, CF(1) - the catalytic core - and CF(0) - the membrane proton channel. CF(1) has five subunits: alpha(3), beta(3), gamma(1), delta(1), epsilon(1). CF(0) has three main subunits: a(1), b(2) and c(9-12). The alpha and beta chains form an alternating ring which encloses part of the gamma chain. CF(1) is attached to CF(0) by a central stalk formed by the gamma and epsilon chains, while a peripheral stalk is formed by the delta and b chains.

It localises to the cell membrane. It carries out the reaction ATP + H2O + 4 H(+)(in) = ADP + phosphate + 5 H(+)(out). Produces ATP from ADP in the presence of a proton gradient across the membrane. The alpha chain is a regulatory subunit. This is ATP synthase subunit alpha from Mycoplasma capricolum subsp. capricolum (strain California kid / ATCC 27343 / NCTC 10154).